Reading from the N-terminus, the 408-residue chain is Imidazolonepropionase (408 aa).

Residues His-73 and His-75 each contribute to the Fe(3+) site. The Zn(2+) site is built by His-73 and His-75. 4-imidazolone-5-propanoate is bound by residues Arg-82, Tyr-145, and His-178. Position 145 (Tyr-145) interacts with N-formimidoyl-L-glutamate. His-243 lines the Fe(3+) pocket. Residue His-243 coordinates Zn(2+). Gln-246 is a 4-imidazolone-5-propanoate binding site. Asp-318 is a binding site for Fe(3+). Asp-318 contacts Zn(2+). N-formimidoyl-L-glutamate contacts are provided by Asn-320 and Gly-322. Ser-323 is a binding site for 4-imidazolone-5-propanoate.

Belongs to the metallo-dependent hydrolases superfamily. HutI family. Zn(2+) is required as a cofactor. The cofactor is Fe(3+).

The protein localises to the cytoplasm. It catalyses the reaction 4-imidazolone-5-propanoate + H2O = N-formimidoyl-L-glutamate. Its pathway is amino-acid degradation; L-histidine degradation into L-glutamate; N-formimidoyl-L-glutamate from L-histidine: step 3/3. In terms of biological role, catalyzes the hydrolytic cleavage of the carbon-nitrogen bond in imidazolone-5-propanoate to yield N-formimidoyl-L-glutamate. It is the third step in the universal histidine degradation pathway. The sequence is that of Imidazolonepropionase from Shewanella piezotolerans (strain WP3 / JCM 13877).